The following is a 298-amino-acid chain: Estradiol 17-beta-dehydrogenase 11 (298 aa).

Positions M1–S21 are cleaved as a signal peptide. Residue L40–V64 participates in NADP(+) binding. S172 serves as a coordination point for substrate. Y185 acts as the Proton acceptor in catalysis.

The protein belongs to the short-chain dehydrogenases/reductases (SDR) family. 17-beta-HSD 3 subfamily. As to expression, expressed in the liver (at protein level). Also expressed in the intestine and, at much lower levels, in the kidney.

The protein resides in the endoplasmic reticulum. Its subcellular location is the lipid droplet. The catalysed reaction is 17beta-estradiol + NAD(+) = estrone + NADH + H(+). It carries out the reaction 17beta-estradiol + NADP(+) = estrone + NADPH + H(+). Its function is as follows. Can convert androstan-3-alpha,17-beta-diol (3-alpha-diol) to androsterone in vitro, suggesting that it may participate in androgen metabolism during steroidogenesis. May act by metabolizing compounds that stimulate steroid synthesis and/or by generating metabolites that inhibit it. Has no activity toward DHEA (dehydroepiandrosterone), or A-dione (4-androste-3,17-dione), and only a slight activity toward testosterone to A-dione. The sequence is that of Estradiol 17-beta-dehydrogenase 11 (Hsd17b11) from Mus musculus (Mouse).